A 39-amino-acid chain; its full sequence is Photosystem II reaction center protein L (39 aa).

Residues 18 to 38 (SLYLGLLLVFVLGILFSSYFF) form a helical membrane-spanning segment.

Belongs to the PsbL family. PSII is composed of 1 copy each of membrane proteins PsbA, PsbB, PsbC, PsbD, PsbE, PsbF, PsbH, PsbI, PsbJ, PsbK, PsbL, PsbM, PsbT, PsbX, PsbY, PsbZ, Psb30/Ycf12, peripheral proteins PsbO, CyanoQ (PsbQ), PsbU, PsbV and a large number of cofactors. It forms dimeric complexes.

Its subcellular location is the cellular thylakoid membrane. In terms of biological role, one of the components of the core complex of photosystem II (PSII). PSII is a light-driven water:plastoquinone oxidoreductase that uses light energy to abstract electrons from H(2)O, generating O(2) and a proton gradient subsequently used for ATP formation. It consists of a core antenna complex that captures photons, and an electron transfer chain that converts photonic excitation into a charge separation. This subunit is found at the monomer-monomer interface and is required for correct PSII assembly and/or dimerization. The protein is Photosystem II reaction center protein L of Trichormus variabilis (strain ATCC 29413 / PCC 7937) (Anabaena variabilis).